The chain runs to 265 residues: Mlc titration factor A (265 aa).

The Zn(2+) site is built by H111, H148, H152, and E211.

Belongs to the MtfA family. As to quaternary structure, interacts with Mlc. Zn(2+) serves as cofactor.

It localises to the cytoplasm. In terms of biological role, involved in the modulation of the activity of the glucose-phosphotransferase system (glucose-PTS). Interacts with the transcriptional repressor Mlc, preventing its interaction with DNA and leading to the modulation of expression of genes regulated by Mlc, including ptsG, which encodes the PTS system glucose-specific EIICB component. Its function is as follows. Shows zinc-dependent metallopeptidase activity. The polypeptide is Mlc titration factor A (Salmonella agona (strain SL483)).